The primary structure comprises 201 residues: FMN-dependent NADH:quinone oxidoreductase (201 aa).

FMN-binding positions include serine 10, 16–18, 96–99, and 140–143; these read SQS, MYNF, and SRGG.

Belongs to the azoreductase type 1 family. Homodimer. The cofactor is FMN.

It catalyses the reaction 2 a quinone + NADH + H(+) = 2 a 1,4-benzosemiquinone + NAD(+). The catalysed reaction is N,N-dimethyl-1,4-phenylenediamine + anthranilate + 2 NAD(+) = 2-(4-dimethylaminophenyl)diazenylbenzoate + 2 NADH + 2 H(+). Its function is as follows. Quinone reductase that provides resistance to thiol-specific stress caused by electrophilic quinones. In terms of biological role, also exhibits azoreductase activity. Catalyzes the reductive cleavage of the azo bond in aromatic azo compounds to the corresponding amines. The chain is FMN-dependent NADH:quinone oxidoreductase from Salmonella arizonae (strain ATCC BAA-731 / CDC346-86 / RSK2980).